Reading from the N-terminus, the 240-residue chain is MIQVSICSSIGKLTASVGLLIKALSSKTSQVLVGWKVIDKNSKVKIILTIEVNNQGRIFVITGPSGVGKSTLVKALLDHFKEQLFYSISATTRKKRISEKEGIDYFFKDKDEFENLIKQDAFIEWACYNNHYYGTLKSQAEQAIKSGINLMLEIEYQGALQVKSKYPHNVVLIFIKPPSMQELLKRLKKRNDEDETTIKKRLEQAKIEFQQIDNFKYVVTNKEFDKTLNELKSILLSEFI.

A Guanylate kinase-like domain is found at 56–236 (GRIFVITGPS…TLNELKSILL (181 aa)). 63–70 (GPSGVGKS) serves as a coordination point for ATP.

It belongs to the guanylate kinase family.

Its subcellular location is the cytoplasm. It carries out the reaction GMP + ATP = GDP + ADP. Essential for recycling GMP and indirectly, cGMP. The protein is Guanylate kinase (gmk) of Mycoplasma genitalium (strain ATCC 33530 / DSM 19775 / NCTC 10195 / G37) (Mycoplasmoides genitalium).